Reading from the N-terminus, the 120-residue chain is NAD(P)H-quinone oxidoreductase subunit 3, chloroplastic (120 aa).

The next 3 helical transmembrane spans lie at 10 to 30 (FWAF…ISGV), 64 to 84 (MFAL…PWAM), and 88 to 108 (VLGV…IGGL).

Belongs to the complex I subunit 3 family. In terms of assembly, NDH is composed of at least 16 different subunits, 5 of which are encoded in the nucleus.

It localises to the plastid. The protein resides in the chloroplast thylakoid membrane. The catalysed reaction is a plastoquinone + NADH + (n+1) H(+)(in) = a plastoquinol + NAD(+) + n H(+)(out). It carries out the reaction a plastoquinone + NADPH + (n+1) H(+)(in) = a plastoquinol + NADP(+) + n H(+)(out). Functionally, NDH shuttles electrons from NAD(P)H:plastoquinone, via FMN and iron-sulfur (Fe-S) centers, to quinones in the photosynthetic chain and possibly in a chloroplast respiratory chain. The immediate electron acceptor for the enzyme in this species is believed to be plastoquinone. Couples the redox reaction to proton translocation, and thus conserves the redox energy in a proton gradient. This is NAD(P)H-quinone oxidoreductase subunit 3, chloroplastic from Ipomoea purpurea (Common morning glory).